Consider the following 247-residue polypeptide: Geranylgeranylglyceryl phosphate synthase (247 aa).

Mg(2+) contacts are provided by Asp-23 and Ser-52. Residues 171–177, 203–204, and 225–226 contribute to the sn-glycerol 1-phosphate site; these read YLEAGSG, GG, and GT.

This sequence belongs to the GGGP/HepGP synthase family. Group II subfamily. Requires Mg(2+) as cofactor.

The protein localises to the cytoplasm. The catalysed reaction is sn-glycerol 1-phosphate + (2E,6E,10E)-geranylgeranyl diphosphate = sn-3-O-(geranylgeranyl)glycerol 1-phosphate + diphosphate. It functions in the pathway membrane lipid metabolism; glycerophospholipid metabolism. Prenyltransferase that catalyzes the transfer of the geranylgeranyl moiety of geranylgeranyl diphosphate (GGPP) to the C3 hydroxyl of sn-glycerol-1-phosphate (G1P). This reaction is the first ether-bond-formation step in the biosynthesis of archaeal membrane lipids. The sequence is that of Geranylgeranylglyceryl phosphate synthase from Methanococcoides burtonii (strain DSM 6242 / NBRC 107633 / OCM 468 / ACE-M).